Reading from the N-terminus, the 139-residue chain is Small ribosomal subunit protein uS9 (139 aa).

Belongs to the universal ribosomal protein uS9 family.

In Coxiella burnetii (strain CbuG_Q212) (Coxiella burnetii (strain Q212)), this protein is Small ribosomal subunit protein uS9.